We begin with the raw amino-acid sequence, 287 residues long: Protease HtpX homolog (287 aa).

The next 2 membrane-spanning stretches (helical) occupy residues 4 to 24 (VGLFLATNLAILLLLGLVMSL) and 35 to 53 (LLLMAGCFGMGGSLISLAL). H139 is a Zn(2+) binding site. E140 is an active-site residue. H143 contributes to the Zn(2+) binding site. The next 2 helical transmembrane spans lie at 147 to 167 (GDMVTLSLIQGVLNTFVIFLS) and 194 to 214 (AVSMLLEFVFGLFASMIVMWF). Residue E219 coordinates Zn(2+).

This sequence belongs to the peptidase M48B family. Zn(2+) is required as a cofactor.

It is found in the cell inner membrane. The chain is Protease HtpX homolog from Desulfotalea psychrophila (strain LSv54 / DSM 12343).